A 50-amino-acid chain; its full sequence is Ampulexin 1 (50 aa).

Positions 1-26 (MKAIMVLFYVMMLTIIASVSMVNGSP) are cleaved as a signal peptide.

In terms of assembly, monomer. As to expression, expressed in venom sac and, to a lesser extent, in venom gland. Not expressed in brain.

It is found in the secreted. In terms of biological role, amphipathic peptide which probably adopts an alpha-helical structure. When injected in subesophageal ganglia of cockroach P.americana, a natural host for larvae of A.compressa, dampens the escape response for about 1 hour which may contribute to early stages of hypokinesia. Has no antimicrobial activity against E.coli DH5alpha or B.thuringiensis. Is not cytotoxic in vitro. The polypeptide is Ampulexin 1 (Ampulex compressa (Emerald cockroach wasp)).